The primary structure comprises 106 residues: Nucleoid-associated protein Smal_0858 (106 aa).

The segment at 81-106 (IDAESKSKMGSATAGMQLPPGMKLPF) is disordered.

The protein belongs to the YbaB/EbfC family. As to quaternary structure, homodimer.

The protein localises to the cytoplasm. The protein resides in the nucleoid. Binds to DNA and alters its conformation. May be involved in regulation of gene expression, nucleoid organization and DNA protection. The chain is Nucleoid-associated protein Smal_0858 from Stenotrophomonas maltophilia (strain R551-3).